Reading from the N-terminus, the 352-residue chain is Histidine biosynthesis bifunctional protein HisB (352 aa).

Residues 1–164 (MSQKILFIDR…EIENEILSSF (164 aa)) are histidinol-phosphatase. Aspartate 9 acts as the Nucleophile in catalysis. Positions 9 and 11 each coordinate Mg(2+). Aspartate 11 acts as the Proton donor in catalysis. Zn(2+)-binding residues include cysteine 93, histidine 95, cysteine 101, and cysteine 103. Aspartate 130 contributes to the Mg(2+) binding site. The tract at residues 165–352 (RSASYQRTTK…ENLASSKGVI (188 aa)) is imidazoleglycerol-phosphate dehydratase.

It in the N-terminal section; belongs to the histidinol-phosphatase family. The protein in the C-terminal section; belongs to the imidazoleglycerol-phosphate dehydratase family. The cofactor is Mg(2+). It depends on Zn(2+) as a cofactor.

Its subcellular location is the cytoplasm. It catalyses the reaction D-erythro-1-(imidazol-4-yl)glycerol 3-phosphate = 3-(imidazol-4-yl)-2-oxopropyl phosphate + H2O. The enzyme catalyses L-histidinol phosphate + H2O = L-histidinol + phosphate. The protein operates within amino-acid biosynthesis; L-histidine biosynthesis; L-histidine from 5-phospho-alpha-D-ribose 1-diphosphate: step 6/9. It participates in amino-acid biosynthesis; L-histidine biosynthesis; L-histidine from 5-phospho-alpha-D-ribose 1-diphosphate: step 8/9. The polypeptide is Histidine biosynthesis bifunctional protein HisB (Campylobacter jejuni subsp. doylei (strain ATCC BAA-1458 / RM4099 / 269.97)).